A 385-amino-acid chain; its full sequence is Leucine aminopeptidase 1 (385 aa).

Positions 1–19 (MKFPSFLSLGIAASTTALA) are cleaved as a signal peptide. Positions 20–87 (ALPDQKPIGD…FPRAFAKTAV (68 aa)) are excised as a propeptide. An N-linked (GlcNAc...) asparagine glycan is attached at Asn177. The Zn(2+) site is built by His185 and Asp204. Asn229 is a glycosylation site (N-linked (GlcNAc...) asparagine). The Zn(2+) site is built by Glu243 and Asp270. Cys319 and Cys323 are oxidised to a cystine. A Zn(2+)-binding site is contributed by His352.

It belongs to the peptidase M28 family. M28E subfamily. In terms of assembly, monomer. The cofactor is Zn(2+).

It is found in the secreted. Extracellular aminopeptidase that allows assimilation of proteinaceous substrates. The sequence is that of Leucine aminopeptidase 1 (LAP1) from Ajellomyces dermatitidis (strain ER-3 / ATCC MYA-2586) (Blastomyces dermatitidis).